We begin with the raw amino-acid sequence, 41 residues long: Large ribosomal subunit protein bL36 (41 aa).

Belongs to the bacterial ribosomal protein bL36 family.

This chain is Large ribosomal subunit protein bL36, found in Caulobacter vibrioides (strain ATCC 19089 / CIP 103742 / CB 15) (Caulobacter crescentus).